A 142-amino-acid polypeptide reads, in one-letter code: NTF2-related export protein 2 (142 aa).

Residues 17-136 (AAEEFVNIYY…WKIASDCFRF (120 aa)) enclose the NTF2 domain.

As to quaternary structure, associates with NXF1, NXF2, NXF3 and NXF5.

It localises to the nucleus. Its subcellular location is the cytoplasm. Its function is as follows. Regulator of protein export for NES-containing proteins. Also plays a role in mRNA nuclear export. The protein is NTF2-related export protein 2 of Homo sapiens (Human).